The primary structure comprises 388 residues: Succinate--CoA ligase [ADP-forming] subunit beta (388 aa).

In terms of domain architecture, ATP-grasp spans 9 to 244; the sequence is KEILRKFGVA…LDEEDPAEIE (236 aa). Residues Lys-46, 53 to 55, Glu-99, Ala-102, and Glu-107 contribute to the ATP site; that span reads GRG. Mg(2+) is bound by residues Asn-199 and Asp-213. Residues Asn-264 and 321 to 323 contribute to the substrate site; that span reads GIM.

The protein belongs to the succinate/malate CoA ligase beta subunit family. Heterotetramer of two alpha and two beta subunits. Mg(2+) is required as a cofactor.

It carries out the reaction succinate + ATP + CoA = succinyl-CoA + ADP + phosphate. The enzyme catalyses GTP + succinate + CoA = succinyl-CoA + GDP + phosphate. The protein operates within carbohydrate metabolism; tricarboxylic acid cycle; succinate from succinyl-CoA (ligase route): step 1/1. Succinyl-CoA synthetase functions in the citric acid cycle (TCA), coupling the hydrolysis of succinyl-CoA to the synthesis of either ATP or GTP and thus represents the only step of substrate-level phosphorylation in the TCA. The beta subunit provides nucleotide specificity of the enzyme and binds the substrate succinate, while the binding sites for coenzyme A and phosphate are found in the alpha subunit. The protein is Succinate--CoA ligase [ADP-forming] subunit beta of Burkholderia thailandensis (strain ATCC 700388 / DSM 13276 / CCUG 48851 / CIP 106301 / E264).